We begin with the raw amino-acid sequence, 1385 residues long: DNA-directed RNA polymerase subunit beta'' (1385 aa).

Zn(2+) is bound by residues Cys224, Cys294, Cys301, and Cys304.

This sequence belongs to the RNA polymerase beta' chain family. RpoC2 subfamily. In terms of assembly, in plastids the minimal PEP RNA polymerase catalytic core is composed of four subunits: alpha, beta, beta', and beta''. When a (nuclear-encoded) sigma factor is associated with the core the holoenzyme is formed, which can initiate transcription. Requires Zn(2+) as cofactor.

Its subcellular location is the plastid. The protein resides in the chloroplast. It carries out the reaction RNA(n) + a ribonucleoside 5'-triphosphate = RNA(n+1) + diphosphate. Functionally, DNA-dependent RNA polymerase catalyzes the transcription of DNA into RNA using the four ribonucleoside triphosphates as substrates. This Illicium oligandrum (Star anise) protein is DNA-directed RNA polymerase subunit beta''.